Consider the following 378-residue polypeptide: Erythronate-4-phosphate dehydrogenase (378 aa).

Substrate is bound by residues serine 45 and threonine 66. NAD(+) is bound by residues aspartate 146 and threonine 175. Arginine 208 is an active-site residue. NAD(+) is bound at residue aspartate 232. The active site involves glutamate 237. Histidine 254 acts as the Proton donor in catalysis. Residue glycine 257 coordinates NAD(+). Residue tyrosine 258 participates in substrate binding.

The protein belongs to the D-isomer specific 2-hydroxyacid dehydrogenase family. PdxB subfamily. Homodimer.

It is found in the cytoplasm. The enzyme catalyses 4-phospho-D-erythronate + NAD(+) = (R)-3-hydroxy-2-oxo-4-phosphooxybutanoate + NADH + H(+). Its pathway is cofactor biosynthesis; pyridoxine 5'-phosphate biosynthesis; pyridoxine 5'-phosphate from D-erythrose 4-phosphate: step 2/5. In terms of biological role, catalyzes the oxidation of erythronate-4-phosphate to 3-hydroxy-2-oxo-4-phosphonooxybutanoate. The polypeptide is Erythronate-4-phosphate dehydrogenase (Salmonella dublin (strain CT_02021853)).